The sequence spans 131 residues: Phosphomevalonate dehydratase small subunit (131 aa).

S62 (proton acceptor) is an active-site residue.

This sequence belongs to the AcnX type II small subunit family. As to quaternary structure, heterodimer composed of a large subunit (PMDh-L) and a small subunit (PMDh-S).

It carries out the reaction (R)-5-phosphomevalonate = (2E)-3-methyl-5-phosphooxypent-2-enoate + H2O. It functions in the pathway isoprenoid biosynthesis; isopentenyl diphosphate biosynthesis via mevalonate pathway. Its function is as follows. Component of a hydro-lyase that catalyzes the dehydration of mevalonate 5-phosphate (MVA5P) to form trans-anhydromevalonate 5-phosphate (tAHMP). Involved in the archaeal mevalonate (MVA) pathway, which provides fundamental precursors for isoprenoid biosynthesis, such as isopentenyl diphosphate (IPP) and dimethylallyl diphosphate (DMAPP). This Methanothermobacter thermautotrophicus (strain ATCC 29096 / DSM 1053 / JCM 10044 / NBRC 100330 / Delta H) (Methanobacterium thermoautotrophicum) protein is Phosphomevalonate dehydratase small subunit.